A 322-amino-acid polypeptide reads, in one-letter code: NADH-quinone oxidoreductase subunit H (322 aa).

A run of 8 helical transmembrane segments spans residues 15–35 (IFQSIVILVCVLITASIMSVV), 81–101 (ITFLIAPILAFISLLLVITII), 114–134 (IGVLFFLMMASLSVYSVLLAG), 149–169 (ATAQTLSYEVFLGLSCMGVVA), 184–204 (IGLWNIIPQFFGFLAFFIAGL), 237–257 (FFIGEYISIIVVSSLISTMFF), 265–285 (FPSYFWFILKTLCFMMIFILI), and 299–319 (LFGWKVCFPLTLINLIFTALI).

This sequence belongs to the complex I subunit 1 family. As to quaternary structure, NDH-1 is composed of 13 different subunits. Subunits NuoA, H, J, K, L, M, N constitute the membrane sector of the complex.

Its subcellular location is the cell membrane. It catalyses the reaction a quinone + NADH + 5 H(+)(in) = a quinol + NAD(+) + 4 H(+)(out). NDH-1 shuttles electrons from NADH, via FMN and iron-sulfur (Fe-S) centers, to quinones in the respiratory chain. The immediate electron acceptor for the enzyme in this species is believed to be ubiquinone. Couples the redox reaction to proton translocation (for every two electrons transferred, four hydrogen ions are translocated across the cytoplasmic membrane), and thus conserves the redox energy in a proton gradient. This subunit may bind ubiquinone. The polypeptide is NADH-quinone oxidoreductase subunit H (Buchnera aphidicola subsp. Baizongia pistaciae (strain Bp)).